Reading from the N-terminus, the 336-residue chain is Dihydroorotate dehydrogenase (quinone) (336 aa).

FMN contacts are provided by residues 62 to 66 (AGLDK) and Thr86. Residue Lys66 coordinates substrate. 111-115 (NRMGF) is a substrate binding site. The FMN site is built by Asn139 and Asn172. Asn172 serves as a coordination point for substrate. The active-site Nucleophile is the Ser175. Asn177 contributes to the substrate binding site. FMN contacts are provided by Lys217 and Thr245. 246–247 (NT) serves as a coordination point for substrate. Residues Gly268, Gly297, and 318 to 319 (YS) contribute to the FMN site.

The protein belongs to the dihydroorotate dehydrogenase family. Type 2 subfamily. As to quaternary structure, monomer. FMN serves as cofactor.

The protein resides in the cell membrane. It carries out the reaction (S)-dihydroorotate + a quinone = orotate + a quinol. Its pathway is pyrimidine metabolism; UMP biosynthesis via de novo pathway; orotate from (S)-dihydroorotate (quinone route): step 1/1. In terms of biological role, catalyzes the conversion of dihydroorotate to orotate with quinone as electron acceptor. The protein is Dihydroorotate dehydrogenase (quinone) of Yersinia enterocolitica serotype O:8 / biotype 1B (strain NCTC 13174 / 8081).